We begin with the raw amino-acid sequence, 536 residues long: CTP synthase (536 aa).

The tract at residues 1 to 267 (MTKYIFVTGG…DQIVCDHLKL (267 aa)) is amidoligase domain. Ser13 provides a ligand contact to CTP. Ser13 serves as a coordination point for UTP. ATP is bound at residue 14–19 (SIGKGI). Position 54 (Tyr54) interacts with L-glutamine. Asp71 contributes to the ATP binding site. Mg(2+) is bound by residues Asp71 and Glu141. CTP-binding positions include 148–150 (DIE), 188–193 (KTKPTQ), and Lys224. UTP is bound by residues 188-193 (KTKPTQ) and Lys224. The region spanning 292–535 (KIALVGKYVE…ITAAVENSQA (244 aa)) is the Glutamine amidotransferase type-1 domain. Gly354 contributes to the L-glutamine binding site. The Nucleophile; for glutamine hydrolysis role is filled by Cys381. Residues 382-385 (LGMQ), Glu405, and Arg463 contribute to the L-glutamine site. Active-site residues include His508 and Glu510.

The protein belongs to the CTP synthase family. Homotetramer.

The enzyme catalyses UTP + L-glutamine + ATP + H2O = CTP + L-glutamate + ADP + phosphate + 2 H(+). The catalysed reaction is L-glutamine + H2O = L-glutamate + NH4(+). It carries out the reaction UTP + NH4(+) + ATP = CTP + ADP + phosphate + 2 H(+). It functions in the pathway pyrimidine metabolism; CTP biosynthesis via de novo pathway; CTP from UDP: step 2/2. Its activity is regulated as follows. Allosterically activated by GTP, when glutamine is the substrate; GTP has no effect on the reaction when ammonia is the substrate. The allosteric effector GTP functions by stabilizing the protein conformation that binds the tetrahedral intermediate(s) formed during glutamine hydrolysis. Inhibited by the product CTP, via allosteric rather than competitive inhibition. In terms of biological role, catalyzes the ATP-dependent amination of UTP to CTP with either L-glutamine or ammonia as the source of nitrogen. Regulates intracellular CTP levels through interactions with the four ribonucleotide triphosphates. This is CTP synthase from Streptococcus mutans serotype c (strain ATCC 700610 / UA159).